Here is a 438-residue protein sequence, read N- to C-terminus: MASSSLCHRYFNKITVTPFFNTKKLHHYSPRRISLRVNRRSFSISATMSSSTKKVLIPVAHGTEPFEAVVMIDVLRRGGADVTVASVENQVGVDACHGIKMVADTLLSDITDSVFDLIMLPGGLPGGETLKNCKPLEKMVKKQDTDGRLNAAICCAPALAFGTWGLLEGKKATCYPVFMEKLAACATAVESRVEIDGKIVTSRGPGTTMEFSVTLVEQLLGKEKAVEVSGPLVMRPNPGDEYTITELNQVSWSFEGTPQILVPIADGSEEMEAVAIIDVLKRAKANVVVAALGNSLEVVASRKVKLVADVLLDEAEKNSYDLIVLPGGLGGAEAFASSEKLVNMLKKQAESNKPYGAICASPALVFEPHGLLKGKKATAFPAMCSKLTDQSHIEHRVLVDGNLITSRGPGTSLEFALAIVEKFYGREKGLQLSKATLV.

A chloroplast-targeting transit peptide spans 1–45; that stretch reads MASSSLCHRYFNKITVTPFFNTKKLHHYSPRRISLRVNRRSFSIS. PfpI endopeptidase domains follow at residues 53-220 and 258-424; these read KKVL…EQLL and PQIL…EKFY.

The protein belongs to the peptidase C56 family. As to quaternary structure, homodimer.

Its subcellular location is the plastid. The protein resides in the chloroplast. Functionally, may be involved in oxidative stress response. This is Protein DJ-1 homolog B (DJ1B) from Arabidopsis thaliana (Mouse-ear cress).